The primary structure comprises 192 residues: MAPLGASPRLVLLFSGKRKSGKDFVTERLKSRLGGNICALLRLSGPLKEEYAREHGLDFQRLLDASTYKETYRRDMICWGEQKRQADPGFFCRKIVEGVSQPIWLVSDTRRTSDIQWFQEAYGAVIQTVRVVASEQSRQQRGWVFTPGVDDAESECGLDNFGNFDWVIENHGDEQCLEDQLEHLLGFIQAKL.

Residues 17-23 and arginine 141 contribute to the ATP site; that span reads KRKSGKD. Residue asparagine 170 coordinates substrate. ATP is bound by residues histidine 171 and glutamine 180.

Monomer.

It localises to the cytoplasm. Its subcellular location is the cytosol. The catalysed reaction is (R)-5-phosphomevalonate + ATP = (R)-5-diphosphomevalonate + ADP. The protein operates within isoprenoid biosynthesis; isopentenyl diphosphate biosynthesis via mevalonate pathway; isopentenyl diphosphate from (R)-mevalonate: step 2/3. Its function is as follows. Catalyzes the reversible ATP-dependent phosphorylation of mevalonate 5-phosphate to produce mevalonate diphosphate and ADP, a key step in the mevalonic acid mediated biosynthesis of isopentenyl diphosphate and other polyisoprenoid metabolites. The protein is Phosphomevalonate kinase (Pmvk) of Mus musculus (Mouse).